A 549-amino-acid chain; its full sequence is Glucose-6-phosphate isomerase (549 aa).

An N6-acetyllysine mark is found at lysine 80, lysine 228, and lysine 234. Glutamate 355 serves as the catalytic Proton donor. Catalysis depends on residues histidine 386 and lysine 514.

The protein belongs to the GPI family.

It is found in the cytoplasm. It carries out the reaction alpha-D-glucose 6-phosphate = beta-D-fructose 6-phosphate. It functions in the pathway carbohydrate biosynthesis; gluconeogenesis. The protein operates within carbohydrate degradation; glycolysis; D-glyceraldehyde 3-phosphate and glycerone phosphate from D-glucose: step 2/4. In terms of biological role, catalyzes the reversible isomerization of glucose-6-phosphate to fructose-6-phosphate. The polypeptide is Glucose-6-phosphate isomerase (Escherichia coli O139:H28 (strain E24377A / ETEC)).